Here is a 1323-residue protein sequence, read N- to C-terminus: Traf2 and NCK-interacting protein kinase (1323 aa).

The Protein kinase domain maps to 25–289 (FELVELVGNG…TEQLMKHPFI (265 aa)). ATP-binding positions include 31 to 39 (VGNGTYGQV) and Lys54. Asp153 functions as the Proton acceptor in the catalytic mechanism. Phosphothreonine is present on Thr187. Disordered stretches follow at residues 284 to 347 (MKHP…LPGE), 397 to 559 (EQKE…LRPV), and 571 to 838 (SQGP…NEQY). A compositionally biased stretch (basic and acidic residues) spans 288-307 (FIRDQPNERQVRIQLKDHID). A mediates interaction with NEDD4 region spans residues 290–1010 (RDQPNERQVR…EIRKYKKRFN (721 aa)). The span at 317–335 (DETEYEYSGSEEEEEENDS) shows a compositional bias: acidic residues. Phosphoserine occurs at positions 324 and 326. Basic and acidic residues-rich tracts occupy residues 397-470 (EQKE…ERDY), 477-494 (QRQE…HYKE), and 503-513 (AWAKEVEERSR). 2 positions are modified to phosphoserine: Ser531 and Ser541. Residue Thr552 is modified to Phosphothreonine. 4 positions are modified to phosphoserine: Ser571, Ser579, Ser581, and Ser611. Residues 623 to 640 (RIEKFDRSSWLRQEEDIP) are compositionally biased toward basic and acidic residues. Phosphoserine occurs at positions 649, 651, 659, 672, 678, 691, 735, 737, and 740. Low complexity predominate over residues 691-726 (SSLQRTSSGSSSSSSTPSSQPSSQGGSQPGSQAGSS). Composition is skewed to basic and acidic residues over residues 746–760 (EPSK…DITR) and 772–790 (KELR…KKVT). Over residues 797–810 (EESESSEEEEEDGE) the composition is skewed to acidic residues. Position 922 is a phosphoserine (Ser922). The disordered stretch occupies residues 939–960 (FVDPRVYQTSPTDEDEEDDESS). Over residues 950 to 959 (TDEDEEDDES) the composition is skewed to acidic residues. A CNH domain is found at 1010–1297 (NSEILCAALW…KFLCERNDKV (288 aa)).

The protein belongs to the protein kinase superfamily. STE Ser/Thr protein kinase family. STE20 subfamily. Interacts (via the CNH domain) with RAP2A (GTP-bound form preferentially); the interaction is direct and required for the activation of TNIK by RAP2A. Interacts with NEDD4; recruits RAP2A to NEDD4. Interacts with TRAF2 and NCK. Interacts with TCF7L2/TCF4 and CTNNB1; the interaction is direct. Interacts with TANC1. In terms of processing, autophosphorylated. Autophosphorylation is activated by RAP2A and induces association to the cytoskeletal fraction.

The protein localises to the nucleus. It localises to the cytoplasm. The protein resides in the recycling endosome. It is found in the cytoskeleton. It carries out the reaction L-seryl-[protein] + ATP = O-phospho-L-seryl-[protein] + ADP + H(+). It catalyses the reaction L-threonyl-[protein] + ATP = O-phospho-L-threonyl-[protein] + ADP + H(+). Functionally, serine/threonine kinase that acts as an essential activator of the Wnt signaling pathway. Recruited to promoters of Wnt target genes and required to activate their expression. May act by phosphorylating TCF4/TCF7L2. Appears to act upstream of the JUN N-terminal pathway. May play a role in the response to environmental stress. Part of a signaling complex composed of NEDD4, RAP2A and TNIK which regulates neuronal dendrite extension and arborization during development. More generally, it may play a role in cytoskeletal rearrangements and regulate cell spreading. Phosphorylates SMAD1 on Thr-322. Activator of the Hippo signaling pathway which plays a pivotal role in organ size control and tumor suppression by restricting proliferation and promoting apoptosis. MAP4Ks act in parallel to and are partially redundant with STK3/MST2 and STK4/MST2 in the phosphorylation and activation of LATS1/2, and establish MAP4Ks as components of the expanded Hippo pathway. The chain is Traf2 and NCK-interacting protein kinase (Tnik) from Mus musculus (Mouse).